The chain runs to 961 residues: Zinc finger protein basonuclin-1 (961 aa).

Residues 210–219 (MTFMLPFQFF) are hydrophobic. C2H2-type zinc fingers lie at residues 325-348 (VFCT…NAVH) and 353-382 (HKCT…PRLH). A disordered region spans residues 370–393 (RNRHSANPNPRLHMPMNRNNRDKD). The Nuclear localization signal motif lies at 501-507 (PKKKSRK). Ser-505 and Ser-509 each carry phosphoserine. Positions 523-572 (EEKRHSLSSDDEVPLQVVSEDEPEDSSPRSDRVPEEQHTQLSLEEPLPQG) are disordered. Over residues 531–547 (SDDEVPLQVVSEDEPED) the composition is skewed to acidic residues. Positions 548-560 (SSPRSDRVPEEQH) are enriched in basic and acidic residues. 2 C2H2-type zinc fingers span residues 687 to 711 (FQCD…NTHA) and 715 to 743 (HACT…SLHQ). Residues 810–864 (ESYNSGPPSEGTILDLSTTSSMKSESSSHSSWDSDGVSEEGTALMEDSDGNCEGQ) are disordered. Over residues 826 to 844 (STTSSMKSESSSHSSWDSD) the composition is skewed to low complexity. 2 C2H2-type zinc fingers span residues 895 to 918 (ITCH…KTVH) and 923 to 950 (HKCK…PNLH). The interval 937-961 (VRSRNRHSQNPNLHKSLASSPSHLQ) is disordered.

Interacts with HSF2BP (via C-terminus). In terms of processing, phosphorylation on Ser-505 and Ser-509 leads to cytoplasmic localization. As to expression, epidermis and germ cells of testis and ovary.

The protein localises to the nucleus. Its subcellular location is the cytoplasm. It is found in the nucleoplasm. Its function is as follows. Transcriptional activator. It is likely involved in the regulation of keratinocytes terminal differentiation in squamous epithelia and hair follicles. Required for the maintenance of spermatogenesis. It is involved in the positive regulation of oocyte maturation, probably acting through the control of BMP15 levels and regulation of AKT signaling cascade. May also play a role in the early development of embryos. The chain is Zinc finger protein basonuclin-1 (Bnc1) from Mus musculus (Mouse).